Here is a 316-residue protein sequence, read N- to C-terminus: Small neutral protease regulatory protein (316 aa).

Residues 1–56 (MRHLRALCAIADTGSVRRAARELGVSQPALTTQLRRIEQSLGAELFHRGRDGCRPT) form the HTH lysR-type domain. The H-T-H motif DNA-binding region spans 16 to 35 (VRRAARELGVSQPALTTQLR).

It belongs to the LysR transcriptional regulatory family.

In terms of biological role, transcriptional trans-activator of the gene (mprA) for the small neutral protease. The sequence is that of Small neutral protease regulatory protein (mprR) from Streptomyces coelicolor.